Consider the following 1383-residue polypeptide: DNA-directed RNA polymerase subunit beta (1383 aa).

This sequence belongs to the RNA polymerase beta chain family. In terms of assembly, the RNAP catalytic core consists of 2 alpha, 1 beta, 1 beta' and 1 omega subunit. When a sigma factor is associated with the core the holoenzyme is formed, which can initiate transcription.

The catalysed reaction is RNA(n) + a ribonucleoside 5'-triphosphate = RNA(n+1) + diphosphate. Functionally, DNA-dependent RNA polymerase catalyzes the transcription of DNA into RNA using the four ribonucleoside triphosphates as substrates. The sequence is that of DNA-directed RNA polymerase subunit beta from Bartonella tribocorum (strain CIP 105476 / IBS 506).